Here is a 393-residue protein sequence, read N- to C-terminus: NAD(P)H-quinone oxidoreductase subunit H, chloroplastic (393 aa).

It belongs to the complex I 49 kDa subunit family. As to quaternary structure, NDH is composed of at least 16 different subunits, 5 of which are encoded in the nucleus.

The protein localises to the plastid. It is found in the chloroplast thylakoid membrane. The catalysed reaction is a plastoquinone + NADH + (n+1) H(+)(in) = a plastoquinol + NAD(+) + n H(+)(out). The enzyme catalyses a plastoquinone + NADPH + (n+1) H(+)(in) = a plastoquinol + NADP(+) + n H(+)(out). Its function is as follows. NDH shuttles electrons from NAD(P)H:plastoquinone, via FMN and iron-sulfur (Fe-S) centers, to quinones in the photosynthetic chain and possibly in a chloroplast respiratory chain. The immediate electron acceptor for the enzyme in this species is believed to be plastoquinone. Couples the redox reaction to proton translocation, and thus conserves the redox energy in a proton gradient. The chain is NAD(P)H-quinone oxidoreductase subunit H, chloroplastic from Solanum tuberosum (Potato).